The primary structure comprises 307 residues: D-alanine--D-alanine ligase (307 aa).

One can recognise an ATP-grasp domain in the interval 101-301 (KTVMRAAGVS…FGELVRWMVE (201 aa)). Residue 127-182 (PLTPPYVVKPIAEGSSMGVIIVRDERSHPPQILASDEWVYGEEVLAETYVAGRELT) coordinates ATP. Mg(2+)-binding residues include Asp251, Glu268, and Asn270.

Belongs to the D-alanine--D-alanine ligase family. The cofactor is Mg(2+). Mn(2+) is required as a cofactor.

The protein resides in the cytoplasm. It catalyses the reaction 2 D-alanine + ATP = D-alanyl-D-alanine + ADP + phosphate + H(+). The protein operates within cell wall biogenesis; peptidoglycan biosynthesis. Its function is as follows. Cell wall formation. The protein is D-alanine--D-alanine ligase of Methylorubrum extorquens (strain CM4 / NCIMB 13688) (Methylobacterium extorquens).